A 395-amino-acid chain; its full sequence is MTYNLHPAILVLKDGKFYRGWTLINSIISFGEVVFNTGMTGYQEIMTDPSYAEQIITFTYPEIGNTGINHEDNESNKIHVKGIITKNICFSPNNWRQQESFINYIFNNQIPHIFGIDTRALTKHLRKTGSMNGCISSQYLNPYLLSTKFKDRLSIESSDLVKQVTTSKNYEFQGYSHKHFSYLQYKTDKMYGYGLKIILIDFGVKYNILSRLDNYGCSIQILPATSSYETINAYNPDGIILSNGPGDPSIITYAIKTVKKIIKYTNIPIFGICMGHQIISLALEGTTFKLKFGHRGLNHPAGMKQKAEVTSQNHGFAVNQESLYKDTINITHFNLNDTTVAGILHNKKPIFSVQYHPEASPGPHDSDYLFKYFINLIKHFKQYKNYKNSSLAQAR.

The tract at residues M1–G192 is CPSase. 3 residues coordinate L-glutamine: S50, G244, and G246. Residues K196–Y383 form the Glutamine amidotransferase type-1 domain. C273 (nucleophile) is an active-site residue. M274, Q277, N313, G315, and F316 together coordinate L-glutamine. Active-site residues include H356 and E358.

The protein belongs to the CarA family. In terms of assembly, composed of two chains; the small (or glutamine) chain promotes the hydrolysis of glutamine to ammonia, which is used by the large (or ammonia) chain to synthesize carbamoyl phosphate. Tetramer of heterodimers (alpha,beta)4.

It localises to the plastid. The protein localises to the chloroplast. It catalyses the reaction hydrogencarbonate + L-glutamine + 2 ATP + H2O = carbamoyl phosphate + L-glutamate + 2 ADP + phosphate + 2 H(+). It carries out the reaction L-glutamine + H2O = L-glutamate + NH4(+). It participates in amino-acid biosynthesis; L-arginine biosynthesis; carbamoyl phosphate from bicarbonate: step 1/1. The protein operates within pyrimidine metabolism; UMP biosynthesis via de novo pathway; (S)-dihydroorotate from bicarbonate: step 1/3. Small subunit of the glutamine-dependent carbamoyl phosphate synthetase (CPSase). CPSase catalyzes the formation of carbamoyl phosphate from the ammonia moiety of glutamine, carbonate, and phosphate donated by ATP, constituting the first step of 2 biosynthetic pathways, one leading to arginine and/or urea and the other to pyrimidine nucleotides. The small subunit (glutamine amidotransferase) binds and cleaves glutamine to supply the large subunit with the substrate ammonia. This is Carbamoyl phosphate synthase small chain from Gracilaria tenuistipitata var. liui (Red alga).